Reading from the N-terminus, the 320-residue chain is Beta-ketoacyl-[acyl-carrier-protein] synthase III (320 aa).

Catalysis depends on residues Cys-114 and His-247. Residues 248 to 252 (QANRR) form an ACP-binding region. Asn-277 is a catalytic residue.

It belongs to the thiolase-like superfamily. FabH family. Homodimer.

Its subcellular location is the cytoplasm. It catalyses the reaction malonyl-[ACP] + acetyl-CoA + H(+) = 3-oxobutanoyl-[ACP] + CO2 + CoA. The protein operates within lipid metabolism; fatty acid biosynthesis. Its function is as follows. Catalyzes the condensation reaction of fatty acid synthesis by the addition to an acyl acceptor of two carbons from malonyl-ACP. Catalyzes the first condensation reaction which initiates fatty acid synthesis and may therefore play a role in governing the total rate of fatty acid production. Possesses both acetoacetyl-ACP synthase and acetyl transacylase activities. Its substrate specificity determines the biosynthesis of branched-chain and/or straight-chain of fatty acids. The polypeptide is Beta-ketoacyl-[acyl-carrier-protein] synthase III (Neisseria meningitidis serogroup A / serotype 4A (strain DSM 15465 / Z2491)).